Here is a 358-residue protein sequence, read N- to C-terminus: Heme A synthase (358 aa).

The next 8 membrane-spanning stretches (helical) occupy residues 22–42 (IQVW…VGGA), 107–127 (VLGR…WATK), 133–153 (ILFP…IGWW), 172–192 (LAFH…LSRG), 208–228 (FAAW…LVAG), 269–289 (FIHR…AFYV), 302–322 (AFLI…TLLH), and 324–344 (VPIS…CFAV). Position 271 (His271) interacts with heme. His332 provides a ligand contact to heme.

Belongs to the COX15/CtaA family. Type 2 subfamily. In terms of assembly, interacts with CtaB. It depends on heme b as a cofactor.

It localises to the cell membrane. The catalysed reaction is Fe(II)-heme o + 2 A + H2O = Fe(II)-heme a + 2 AH2. It functions in the pathway porphyrin-containing compound metabolism; heme A biosynthesis; heme A from heme O: step 1/1. Catalyzes the conversion of heme O to heme A by two successive hydroxylations of the methyl group at C8. The first hydroxylation forms heme I, the second hydroxylation results in an unstable dihydroxymethyl group, which spontaneously dehydrates, resulting in the formyl group of heme A. The sequence is that of Heme A synthase from Bartonella tribocorum (strain CIP 105476 / IBS 506).